The sequence spans 1125 residues: Exportin-6 (1125 aa).

Position 2 is an N-acetylalanine (A2). Residues 31–97 (IEELLNNFAQ…RSCLPKLLLA (67 aa)) form the Importin N-terminal domain. A Phosphoserine modification is found at S199. Phosphothreonine occurs at positions 201 and 204. Phosphoserine is present on residues S208 and S224.

It belongs to the exportin family. In terms of assembly, found in a complex with XPO6, Ran, ACTB and PFN1. Interacts with ACTB. Interacts with ACTB in a RanGTP-dependent manner.

It is found in the nucleus. The protein resides in the cytoplasm. Mediates the nuclear export of actin and profilin-actin complexes in somatic cells. This chain is Exportin-6 (Xpo6), found in Mus musculus (Mouse).